Here is a 418-residue protein sequence, read N- to C-terminus: MGSTTLLKESGPREVFCGLTSIVWLHRRMPDAFFLVVGSRTCAHLIQSAAGVMIFAEPRFGTAILEERDLAGLADAHEELDRVVNDLLARRPEIRTLFLVGSCPSEVIKLDLARVAERLNGQLQGGVRVLNYSGSGIETTFTQGEDGALKAMVPLMPNSNEAQLLLVGTMANAVEDRLKHLFERLGIPSVSSLPPRQSTDLPSVGPGTRVLLTQPYLTDTARELKDRGAEILQAPFPLGAEGSRLWMEAAAQAFGINGSHVATILEPLMVRAQKALSPYKEQLAGKRIFLMPESQLEIPLARFLHRECGMELVEVGVPYLNRDMMQSELELLPPNTQVMEGQHVEKQLDRVREQRPDLVVCGMGLANPLEAEEIATKWSIELIFSPIHGIDQAADLAELFARPLHRRDLLNNQLLVSV.

The [4Fe-4S] cluster site is built by Cys17, Cys42, and Cys103.

This sequence belongs to the BchN/ChlN family. Protochlorophyllide reductase is composed of three subunits; ChlL, ChlN and ChlB. Forms a heterotetramer of two ChlB and two ChlN subunits. The cofactor is [4Fe-4S] cluster.

The catalysed reaction is chlorophyllide a + oxidized 2[4Fe-4S]-[ferredoxin] + 2 ADP + 2 phosphate = protochlorophyllide a + reduced 2[4Fe-4S]-[ferredoxin] + 2 ATP + 2 H2O. It participates in porphyrin-containing compound metabolism; chlorophyll biosynthesis (light-independent). Component of the dark-operative protochlorophyllide reductase (DPOR) that uses Mg-ATP and reduced ferredoxin to reduce ring D of protochlorophyllide (Pchlide) to form chlorophyllide a (Chlide). This reaction is light-independent. The NB-protein (ChlN-ChlB) is the catalytic component of the complex. The polypeptide is Light-independent protochlorophyllide reductase subunit N (Prochlorococcus marinus (strain MIT 9303)).